Reading from the N-terminus, the 89-residue chain is Large ribosomal subunit protein bL27 (89 aa).

A disordered region spans residues 1-21 (MAHKKAGGSSRNGRDSQSKRL).

Belongs to the bacterial ribosomal protein bL27 family.

The polypeptide is Large ribosomal subunit protein bL27 (Rhizobium leguminosarum bv. trifolii (strain WSM2304)).